The following is a 452-amino-acid chain: Sodium-coupled neutral amino acid transporter 7 (452 aa).

The next 11 helical transmembrane spans lie at 46 to 66, 74 to 94, 120 to 140, 168 to 188, 195 to 215, 234 to 256, 272 to 292, 309 to 329, 361 to 381, 385 to 405, and 419 to 439; these read AVFI…PAAF, AAIS…VILA, LCEV…FIII, FTIS…REIS, FLSV…CIWP, VFNA…PVYG, IAMF…FLLF, IAVA…YPIL, VLQT…IPDI, ISLI…LCLI, and SWWA…FIFG.

Belongs to the amino acid/polyamine transporter 2 family.

The protein resides in the lysosome membrane. The protein localises to the cell projection. Its subcellular location is the axon. The enzyme catalyses L-asparagine(in) + Na(+)(in) = L-asparagine(out) + Na(+)(out). The catalysed reaction is L-glutamine(in) + Na(+)(in) = L-glutamine(out) + Na(+)(out). In terms of biological role, symporter that selectively cotransports sodium ions and amino acids, such as L-glutamine and L-asparagine from the lysosome into the cytoplasm and may participates in mTORC1 activation. The transport activity requires an acidic lysosomal lumen. This chain is Sodium-coupled neutral amino acid transporter 7, found in Xenopus laevis (African clawed frog).